The following is a 266-amino-acid chain: Type II iodothyronine deiodinase (266 aa).

Residues 1–9 (MGLLSVDLL) lie on the Lumenal side of the membrane. Residues 10 to 34 (ITLQILPVFFSNCLFLALYDSVILL) form a helical; Signal-anchor for type III membrane protein membrane-spanning segment. Topologically, residues 35–266 (KHVALLLSRS…KNFSKRUILD (232 aa)) are cytoplasmic. U130 is a catalytic residue. Non-standard amino acids (selenocysteine) are located at U130 and U263.

Belongs to the iodothyronine deiodinase family. Predominantly monomer. Can form homodimers but homodimerization is not essential for enzyme activity. Interacts with USP20 and USP33. Interacts with MARCHF6. Post-translationally, ubiquitinated by MARCHF6, leading to its degradation by the proteasome. Deubiquitinated by USP20 and USP33. As to expression, expressed in mammary gland and in brain.

Its subcellular location is the endoplasmic reticulum membrane. It carries out the reaction 3,3',5-triiodo-L-thyronine + iodide + A + H(+) = L-thyroxine + AH2. The catalysed reaction is 3,3'-diiodo-L-thyronine + iodide + A + H(+) = 3,3',5'-triiodo-L-thyronine + AH2. The enzyme catalyses 3'-iodo-L-thyronine + iodide + A + H(+) = 3',5'-diiodo-L-thyronine + AH2. It catalyses the reaction 3,3'-diiodothyronamine + iodide + A + H(+) = 3,3',5'-triiodothyronamine + AH2. It carries out the reaction 3'-iodothyronamine + iodide + A + H(+) = 3',5'-diiodothyronamine + AH2. Functionally, plays a crucial role in the metabolism of thyroid hormones (TH) and has specific roles in TH activation and inactivation by deiodination. Catalyzes the deiodination of L-thyroxine (T4) to 3,5,3'-triiodothyronine (T3) and 3,3',5'-triiodothyronine (rT3) to 3,3'-diiodothyronine (3,3'-T2) via outer-ring deiodination (ORD). Catalyzes the deiodination of 3',5'-diiodothyronine (3',5'-T2) to 3'-monoiodothyronine (3'-T1) via ORD. Catalyzes the phenolic ring deiodinations of 3,3',5'-triiodothyronamine and 3',5'- diiodothyronamine. This is Type II iodothyronine deiodinase (Dio2) from Mus musculus (Mouse).